The primary structure comprises 98 residues: Cytochrome c-552 (98 aa).

The signal sequence occupies residues 1-18 (MKKFLLVAVVGLAGITFA). Cysteine 28, cysteine 31, histidine 32, and methionine 77 together coordinate heme c.

It belongs to the cytochrome c family. Binds 1 heme c group covalently per subunit.

Reacts with hydrogenase. This is Cytochrome c-552 from Hydrogenobacter thermophilus (strain DSM 6534 / IAM 12695 / TK-6).